A 170-amino-acid polypeptide reads, in one-letter code: RNA pyrophosphohydrolase (170 aa).

Residues 8–151 (PYRPNVGIAL…KKALYAELIP (144 aa)) form the Nudix hydrolase domain. Positions 42-63 (GGIDEGETPQVAALREMGEEIG) match the Nudix box motif.

The protein belongs to the Nudix hydrolase family. RppH subfamily. A divalent metal cation serves as cofactor.

Accelerates the degradation of transcripts by removing pyrophosphate from the 5'-end of triphosphorylated RNA, leading to a more labile monophosphorylated state that can stimulate subsequent ribonuclease cleavage. The protein is RNA pyrophosphohydrolase of Gluconobacter oxydans (strain 621H) (Gluconobacter suboxydans).